Reading from the N-terminus, the 629-residue chain is uncharacterized protein (629 aa).

At M1 the chain carries N-acetylmethionine. Residues 308–395 (VDPEPEPDPP…PGRRSRARNA (88 aa)) are disordered. Residues 322–334 (SANEPASQPNSRS) are compositionally biased toward polar residues. Positions 451 to 587 (LVIFVVDASG…VAEGAAAVVV (137 aa)) constitute a VWFA domain.

Belongs to the Mg-chelatase subunits D/I family.

This is an uncharacterized protein from Mycobacterium tuberculosis (strain ATCC 25618 / H37Rv).